The following is a 352-amino-acid chain: Methylthioribose-1-phosphate isomerase (352 aa).

Residues 55–57 (RGA), Arg98, and Gln201 contribute to the substrate site. Asp242 functions as the Proton donor in the catalytic mechanism. Residue 252-253 (NK) participates in substrate binding.

Belongs to the eIF-2B alpha/beta/delta subunits family. MtnA subfamily.

It catalyses the reaction 5-(methylsulfanyl)-alpha-D-ribose 1-phosphate = 5-(methylsulfanyl)-D-ribulose 1-phosphate. The protein operates within amino-acid biosynthesis; L-methionine biosynthesis via salvage pathway; L-methionine from S-methyl-5-thio-alpha-D-ribose 1-phosphate: step 1/6. In terms of biological role, catalyzes the interconversion of methylthioribose-1-phosphate (MTR-1-P) into methylthioribulose-1-phosphate (MTRu-1-P). In Methylococcus capsulatus (strain ATCC 33009 / NCIMB 11132 / Bath), this protein is Methylthioribose-1-phosphate isomerase.